The chain runs to 128 residues: Large-conductance mechanosensitive channel (128 aa).

2 consecutive transmembrane segments (helical) span residues phenylalanine 10–glycine 30 and glycine 76–isoleucine 96.

It belongs to the MscL family. As to quaternary structure, homopentamer.

Its subcellular location is the cell inner membrane. Its function is as follows. Channel that opens in response to stretch forces in the membrane lipid bilayer. May participate in the regulation of osmotic pressure changes within the cell. This chain is Large-conductance mechanosensitive channel, found in Haemophilus influenzae (strain 86-028NP).